A 268-amino-acid chain; its full sequence is Tetraspanin-5 (268 aa).

Over 1 to 17 (MSGKHYKGPEVSCCIKY) the chain is Cytoplasmic. The helical transmembrane segment at 18-38 (FIFGFNVIFWFLGIAFLGIGL) threads the bilayer. Over 39–61 (WAWNEKGVLSNISSITDLGGFDP) the chain is Extracellular. A glycan (N-linked (GlcNAc...) asparagine) is linked at N49. A helical transmembrane segment spans residues 62 to 82 (VWLFLVVGGVMFILGFAGCIG). Topologically, residues 83-92 (ALRENTFLLK) are cytoplasmic. The chain crosses the membrane as a helical span at residues 93–113 (FFSVFLGIIFFLELTAGVLAF). Residues 114–232 (VFKDWIKDQL…PQFEKWLQDN (119 aa)) lie on the Extracellular side of the membrane. 4 cysteine pairs are disulfide-bonded: C153/C221, C154/C186, C170/C180, and C187/C200. 2 N-linked (GlcNAc...) asparagine glycosylation sites follow: N169 and N174. A glycan (N-linked (GlcNAc...) asparagine) is linked at N232. A helical membrane pass occupies residues 233–253 (LTIVAGIFIGIALLQIFGICL). Over 254-268 (AQNLVSDIEAVRASW) the chain is Cytoplasmic.

This sequence belongs to the tetraspanin (TM4SF) family. Interacts with ADAM10; the interaction influences ADAM10 substrate specificity, endocytosis and turnover. Palmitoylated.

It localises to the cell membrane. Functionally, part of TspanC8 subgroup, composed of 6 members that interact with the transmembrane metalloprotease ADAM10. This interaction is required for ADAM10 exit from the endoplasmic reticulum and for enzymatic maturation and trafficking to the cell surface as well as substrate specificity. Different TspanC8/ADAM10 complexes have distinct substrates. Promotes ADAM10-mediated cleavage of CD44. Seems to regulate VE-cadherin expression in endothelial cells probably through interaction with ADAM10, promoting leukocyte transmigration. The sequence is that of Tetraspanin-5 (TSPAN5) from Bos taurus (Bovine).